The sequence spans 369 residues: MEGTPPGAAPSSALAAVLKHSSALPPESAQVQGYDFNRGVDYHALLDAYRTTGFQATNFGRAVQQVNAMIEKKLEPLAVDEDHHADLTQSRRPLTGCTIFLGYTSNLISSGIRETIRYLVQHNMVDVLVTTAGGVEEDLIKCLAPTYLGEFSLRGKELRESGINRIGNLLVPNDNYCKFEDWLMPILDQMVLEQNTEGVKWTPSKMISRLGKEINNPDSVYYWAHKNHIPVLSPALTDGSLGDMIFFHSYKNPGLVLDIVEDLRLINTQAIFAKRSGMIILGGGVVKHHIANANLMRNGADYAVYINTAQEFDGSDSGARPDEAVSWGKIRMDAQPVKVYADASLVFPLLVAETFAQKADAFRAEKNED.

NAD(+)-binding positions include 105 to 109, 131 to 133, E137, and D238; these read SNLIS and TAG. 136–137 serves as a coordination point for spermidine; it reads EE. D243 serves as a coordination point for spermidine. An NAD(+)-binding site is contributed by G283. H288 provides a ligand contact to spermidine. NAD(+) is bound at residue 308-309; sequence TA. Spermidine contacts are provided by residues 314-316 and 323-329; these read GSD and EAVSWGK. The active-site Nucleophile is K329. 342-343 is an NAD(+) binding site; the sequence is DA.

This sequence belongs to the deoxyhypusine synthase family. It depends on NAD(+) as a cofactor.

The enzyme catalyses [eIF5A protein]-L-lysine + spermidine = [eIF5A protein]-deoxyhypusine + propane-1,3-diamine. It participates in protein modification; eIF5A hypusination. Functionally, catalyzes the NAD-dependent oxidative cleavage of spermidine and the subsequent transfer of the butylamine moiety of spermidine to the epsilon-amino group of a critical lysine residue of the eIF-5A precursor protein to form the intermediate deoxyhypusine residue. This is the first step of the post-translational modification of that lysine into an unusual amino acid residue named hypusine. Hypusination is unique to mature eIF-5A factor and is essential for its function. This is Deoxyhypusine synthase (Dhps) from Mus musculus (Mouse).